A 680-amino-acid polypeptide reads, in one-letter code: MIDRYKHQQLRIGLVSPQQISAWANRILPNGEIVGEVTKPYTFHYKTNKPEKDGLFCERIFGPIKSGICACGNYRVIGDEKEDPKFCEQCGVEFVDSRIRRYQMGYIKLACPVTHVWYLKRLPSYIANLLDKPLKELEGLVYCDFSFARPITKKPTFLRLRGSFEYEIQSWKYSIPLFFTTQGFDTFRNREISTGAGAIREQLADLDLQIIIDYSFLEWKELGEEGPTGNEWEDRKIGRRKDFLVRRMELAKHFIRTNIEPEWMVLCLLPVLPPELRPIIQIDGGKLMSSDINELYRRVIYRNNTLTDLLTTSRSTPGELVMCQEKLVQEAVDTLLDNGIRGQPMRDGHNKVYKSFSDVIEGKEGRFRETLLGKRVDYSGRSVIVVGPSLSLHRCGLPREIAIELFQTFVIRGLIRQHLASNMGVAKSKIREKEPIIWEILQEVMQGHPVLLNRAPTLHRLGIQAFQPILVEGRAICLHPLVRKGFNADFDGDQMAVHVPLSLEAQAEARLLMFSHMNLLSPAIGDPISVPTQDMLMGLYVLTSGTRRGICANRYNPCNRKNYQNERIDDNNYKYTKEPFFCNSYDAIGAYRQKRINLDSPLWLRWQLDQRVIASREAPIEVHYESLGTYHEIYGHYLIVRSVKKEILCIYIRTTVGHISLYREIEEAIQGFCRACSYDT.

Zn(2+) is bound by residues Cys-69, Cys-71, Cys-87, and Cys-90. Mg(2+)-binding residues include Asp-489, Asp-491, and Asp-493.

Belongs to the RNA polymerase beta' chain family. RpoC1 subfamily. In terms of assembly, in plastids the minimal PEP RNA polymerase catalytic core is composed of four subunits: alpha, beta, beta', and beta''. When a (nuclear-encoded) sigma factor is associated with the core the holoenzyme is formed, which can initiate transcription. Requires Mg(2+) as cofactor. Zn(2+) is required as a cofactor.

The protein resides in the plastid. Its subcellular location is the chloroplast. It carries out the reaction RNA(n) + a ribonucleoside 5'-triphosphate = RNA(n+1) + diphosphate. In terms of biological role, DNA-dependent RNA polymerase catalyzes the transcription of DNA into RNA using the four ribonucleoside triphosphates as substrates. This is DNA-directed RNA polymerase subunit beta' from Carica papaya (Papaya).